A 101-amino-acid polypeptide reads, in one-letter code: MAKTSSVEKNNRRRKLADQYGPKRAALKAIIMDQSKPMEERFRAQLKLAALPRNSAKIRIRNRCEVTGRPRAYYRKLKVSRIALRDLGNNGQIPGLVKSSW.

Residues 1–21 form a disordered region; that stretch reads MAKTSSVEKNNRRRKLADQYG.

The protein belongs to the universal ribosomal protein uS14 family. As to quaternary structure, part of the 30S ribosomal subunit. Contacts proteins S3 and S10.

In terms of biological role, binds 16S rRNA, required for the assembly of 30S particles and may also be responsible for determining the conformation of the 16S rRNA at the A site. The sequence is that of Small ribosomal subunit protein uS14 from Mesorhizobium japonicum (strain LMG 29417 / CECT 9101 / MAFF 303099) (Mesorhizobium loti (strain MAFF 303099)).